The following is a 379-amino-acid chain: Glutamate 5-kinase (379 aa).

An ATP-binding site is contributed by K19. Substrate-binding residues include S59, D146, and N158. 178-179 (TD) serves as a coordination point for ATP. Residues 285–363 (RGAVTVDAGA…SEFERLLGYV (79 aa)) form the PUA domain.

Belongs to the glutamate 5-kinase family.

The protein localises to the cytoplasm. The catalysed reaction is L-glutamate + ATP = L-glutamyl 5-phosphate + ADP. Its pathway is amino-acid biosynthesis; L-proline biosynthesis; L-glutamate 5-semialdehyde from L-glutamate: step 1/2. In terms of biological role, catalyzes the transfer of a phosphate group to glutamate to form L-glutamate 5-phosphate. This chain is Glutamate 5-kinase, found in Variovorax paradoxus (strain S110).